Reading from the N-terminus, the 504-residue chain is Histidine ammonia-lyase (504 aa).

Positions Ala142–Gly144 form a cross-link, 5-imidazolinone (Ala-Gly). Ser143 carries the 2,3-didehydroalanine (Ser) modification.

The protein belongs to the PAL/histidase family. In terms of processing, contains an active site 4-methylidene-imidazol-5-one (MIO), which is formed autocatalytically by cyclization and dehydration of residues Ala-Ser-Gly.

It is found in the cytoplasm. It catalyses the reaction L-histidine = trans-urocanate + NH4(+). It participates in amino-acid degradation; L-histidine degradation into L-glutamate; N-formimidoyl-L-glutamate from L-histidine: step 1/3. This Staphylococcus aureus (strain JH1) protein is Histidine ammonia-lyase.